Reading from the N-terminus, the 53-residue chain is Ferredoxin B (53 aa).

Residues 1 to 35 (GIDPNYRSLPVVKEEQGVKIYGTYEPPTKLGIWGT) are N-terminal extension. K29 carries the post-translational modification N6-methyllysine. The 20-residue stretch at 34–53 (GTIVGVDFDLCIADGSCINA) folds into the 4Fe-4S ferredoxin-type 1 domain. [3Fe-4S] cluster is bound by residues C44 and C50.

[3Fe-4S] cluster serves as cofactor. [4Fe-4S] cluster is required as a cofactor.

In terms of biological role, ferredoxins are iron-sulfur proteins that transfer electrons in a wide variety of metabolic reactions. The sequence is that of Ferredoxin B from Sulfuracidifex metallicus (Sulfolobus metallicus).